The following is a 684-amino-acid chain: Methionine--tRNA ligase (684 aa).

Residues 14 to 24 (PYANGAIHLGH) carry the 'HIGH' region motif. Cysteine 145, cysteine 148, cysteine 158, and cysteine 161 together coordinate Zn(2+). Positions 330–334 (KMSKS) match the 'KMSKS' region motif. ATP is bound at residue lysine 333. Residues 582–684 (DFAKLDLRVA…CGIRPGMQVK (103 aa)) form the tRNA-binding domain.

Belongs to the class-I aminoacyl-tRNA synthetase family. MetG type 1 subfamily. As to quaternary structure, homodimer. Zn(2+) serves as cofactor.

Its subcellular location is the cytoplasm. The catalysed reaction is tRNA(Met) + L-methionine + ATP = L-methionyl-tRNA(Met) + AMP + diphosphate. Is required not only for elongation of protein synthesis but also for the initiation of all mRNA translation through initiator tRNA(fMet) aminoacylation. In Haemophilus ducreyi (strain 35000HP / ATCC 700724), this protein is Methionine--tRNA ligase.